Consider the following 1248-residue polypeptide: Reverse gyrase 1 (1248 aa).

Residues 7–44 (IPPSIYLFSCPNCGRSISTYRLLLGSVCNICLEEDKEY) form an RG N-terminal-type zinc finger. 4 residues coordinate Zn(2+): C16, C19, C34, and C37. Residues Q92 and 109 to 116 (APPGLGKT) each bind ATP. The region spanning 96 to 262 (IYRLLSGESF…KKYRENTQKN (167 aa)) is the Helicase ATP-binding domain. A DEAD box motif is present at residues 219-222 (DDVD). The interval 621 to 1248 (QKVKTVLLVV…QVYEEINEIR (628 aa)) is topoisomerase I. Positions 625–789 (TVLLVVESPN…NIRRAEFHEV (165 aa)) constitute a Toprim domain. Residue E631 participates in Mg(2+) binding. An RG C-terminal-type; atypical zinc finger spans residues 706 to 735 (IKKCENNHQFTDFFESNKCPRCMTTKVRYD). Zn(2+)-binding residues include C709, H713, C724, and C727. A Mg(2+)-binding site is contributed by D758. The Topo IA-type catalytic domain occupies 805 to 1248 (NVNLVKSQLV…QVYEEINEIR (444 aa)). The active-site O-(5'-phospho-DNA)-tyrosine intermediate is Y965.

It in the N-terminal section; belongs to the DEAD box helicase family. DDVD subfamily. In the C-terminal section; belongs to the type IA topoisomerase family. Monomer. It depends on Zn(2+) as a cofactor. Requires Mg(2+) as cofactor. The N-terminus is blocked.

It localises to the cytoplasm. The enzyme catalyses ATP + H2O = ADP + phosphate + H(+). Functionally, modifies the topological state of DNA by introducing positive supercoils in an ATP-dependent process. Increases the linking number in steps of +1. Has a DNA-stimulated ATPase activity; closed circular ssDNA stimulates ATPase much better than dsDNA although negative supercoiled, positive supercoiled and relaxed dsDNA all stimulate ATPase activity. All NTPs permit topoisomerization (relaxation) of negatively supercoiled dsDNA without nucleotide hydrolysis. It transiently cleaves a single DNA strand and remains covalently bound to the 5' DNA end. Acts via a tyrosine residue. Reverse gyrase binds and unwinds DNA independently of ATP binding and DNA cleavage. May be involved in rewinding the DNA strands in the regions of the chromosome that have opened up to allow transcription or replication, probably acts via ssDNA regions of the chromosome. The protein is Reverse gyrase 1 of Sulfolobus acidocaldarius (strain ATCC 33909 / DSM 639 / JCM 8929 / NBRC 15157 / NCIMB 11770).